Consider the following 297-residue polypeptide: Formamidopyrimidine-DNA glycosylase (297 aa).

Residue Pro2 is the Schiff-base intermediate with DNA of the active site. The active-site Proton donor is Glu3. The active-site Proton donor; for beta-elimination activity is Lys58. Residues His106, Arg125, and Arg168 each coordinate DNA. Residues 259 to 295 (RVYDREGLACTARGCRGRVRRIVQAGRSTFYCETCQP) form an FPG-type zinc finger. Catalysis depends on Arg285, which acts as the Proton donor; for delta-elimination activity.

It belongs to the FPG family. In terms of assembly, monomer. It depends on Zn(2+) as a cofactor.

The catalysed reaction is Hydrolysis of DNA containing ring-opened 7-methylguanine residues, releasing 2,6-diamino-4-hydroxy-5-(N-methyl)formamidopyrimidine.. It carries out the reaction 2'-deoxyribonucleotide-(2'-deoxyribose 5'-phosphate)-2'-deoxyribonucleotide-DNA = a 3'-end 2'-deoxyribonucleotide-(2,3-dehydro-2,3-deoxyribose 5'-phosphate)-DNA + a 5'-end 5'-phospho-2'-deoxyribonucleoside-DNA + H(+). Its function is as follows. Involved in base excision repair of DNA damaged by oxidation or by mutagenic agents. Acts as a DNA glycosylase that recognizes and removes damaged bases. Has a preference for oxidized purines, such as 7,8-dihydro-8-oxoguanine (8-oxoG). Has AP (apurinic/apyrimidinic) lyase activity and introduces nicks in the DNA strand. Cleaves the DNA backbone by beta-delta elimination to generate a single-strand break at the site of the removed base with both 3'- and 5'-phosphates. The protein is Formamidopyrimidine-DNA glycosylase of Methylobacterium sp. (strain 4-46).